Consider the following 417-residue polypeptide: Actin-related protein 10 (417 aa).

It belongs to the actin family. As to quaternary structure, subunit of dynactin, a multiprotein complex part of a tripartite complex with dynein and a adapter, such as BICDL1, BICD2 or HOOK3. The dynactin complex is built around ACTR1A/ACTB filament and consists of an actin-related filament composed of a shoulder domain, a pointed end and a barbed end. Its length is defined by its flexible shoulder domain. The soulder is composed of 2 DCTN1 subunits, 4 DCTN2 and 2 DCTN3. The 4 DCNT2 (via N-terminus) bind the ACTR1A filament and act as molecular rulers to determine the length. The pointed end is important for binding dynein-dynactin cargo adapters. Consists of 4 subunits: ACTR10, DCNT4, DCTN5 and DCTN6. The barbed end is composed of a CAPZA1:CAPZB heterodimers, which binds ACTR1A/ACTB filament and dynactin and stabilizes dynactin.

The protein resides in the cytoplasm. It is found in the cytoskeleton. In terms of biological role, part of the dynactin complex that activates the molecular motor dynein for ultra-processive transport along microtubules. The chain is Actin-related protein 10 (ACTR10) from Homo sapiens (Human).